The sequence spans 125 residues: Meiotically up-regulated gene 112 protein (125 aa).

The protein resides in the golgi apparatus. In terms of biological role, has a role in meiosis. This chain is Meiotically up-regulated gene 112 protein (mug112), found in Schizosaccharomyces pombe (strain 972 / ATCC 24843) (Fission yeast).